The primary structure comprises 321 residues: MISVNEMGSNVIEEMLDWSEDLKTEVLKLNNGATVIDCGVKAEGGYEAGMYLARLCLADLADLKYTTFDLNGLKWPAIQVATDNPVIACMASQYAGWRISVGNYFGMGSGPARALGLKPKELYEEIGYEDDFEAAVLVMESDKLPDEKVVEFIAKHCSVDPENVMIAVAPTASIAGSVQISARVVETGIHKFESVGFDINCIKSGYGVAPIAPVVGKDVQCMGSTNDCVIYCGETNYTVRFDGELAELEEFVKKVPSTTSQDFGKPFYQTFKEANFDFFKVDAGMFAPARLTVNDLNSTKTISSGGLYPEILLQSFGIRNV.

The protein belongs to the MCH family.

The protein resides in the cytoplasm. It catalyses the reaction 5,10-methenyl-5,6,7,8-tetrahydromethanopterin + H2O = N(5)-formyl-5,6,7,8-tetrahydromethanopterin + H(+). Its pathway is one-carbon metabolism; methanogenesis from CO(2); 5,10-methenyl-5,6,7,8-tetrahydromethanopterin from CO(2): step 3/3. Catalyzes the reversible interconversion of 5-formyl-H(4)MPT to methenyl-H(4)MPT(+). The chain is Methenyltetrahydromethanopterin cyclohydrolase (mch) from Methanosarcina barkeri (strain Fusaro / DSM 804).